Consider the following 220-residue polypeptide: MKTKLMTLQDATGFFRDGMTIMVGGFMGIGTPSRLVEALLESGVRDLTLIANDTAFVDTGIGPLIVNGRVRKVIASHIGTNPETGRRMISGEMDVVLVPQGTLIEQIRCGGAGLGGFLTPTGVGTVVEEGKQTLTLDGKTWLLERPLRADLALIRAHRCDTLGNLTYQLSARNFNPLIALAADITLVEPDELVETGELQPDHIVTPGAVIDHIIVSQESK.

A CoA-binding site is contributed by 24 to 30 (GGFMGIG).

Belongs to the 3-oxoacid CoA-transferase subunit A family. Heterotetramer composed of two alpha subunits (AtoD) and two beta subunits (AtoA).

The protein resides in the cytoplasm. The enzyme catalyses an acyl-CoA + acetate = a carboxylate + acetyl-CoA. It catalyses the reaction acetoacetate + acetyl-CoA = acetoacetyl-CoA + acetate. It carries out the reaction butanoate + acetyl-CoA = butanoyl-CoA + acetate. The catalysed reaction is acetoacetate + butanoyl-CoA = acetoacetyl-CoA + butanoate. It functions in the pathway lipid metabolism; short-chain fatty acid metabolism. With respect to regulation, inhibited by p-chloromercuribenzoate. In terms of biological role, coenzyme A transferase which is involved in short-chain fatty acid degradation and catalyzes the activation of short-chain fatty acids to their respective CoA thiolesters. During acetoacetate degradation, catalyzes the transfer of CoA from acetyl-CoA to acetoacetate by a mechanism involving a covalent enzyme-CoA compound as a reaction intermediate. Utilizes a variety of short chain acyl-CoA and carboxylic acid substrates but exhibits maximal activity with normal and 3-keto substrates. The sequence is that of Acetate CoA-transferase subunit alpha from Escherichia coli (strain K12).